We begin with the raw amino-acid sequence, 59 residues long: Ferredoxin-2 (59 aa).

4Fe-4S ferredoxin-type domains follow at residues 3–32 and 33–59; these read YSVIVDSDKCIGCGECVDVCPVEVYELQNG and KAVPVNEEECLGCESCIEVCPQNAIVE. 8 residues coordinate [4Fe-4S] cluster: Cys-12, Cys-15, Cys-18, Cys-22, Cys-42, Cys-45, Cys-48, and Cys-52.

As to quaternary structure, homodimer. [4Fe-4S] cluster is required as a cofactor.

It is found in the periplasm. Ferredoxins are iron-sulfur proteins that transfer electrons in a wide variety of metabolic reactions. In Desulfomicrobium norvegicum (strain DSM 1741 / NCIMB 8310) (Desulfovibrio baculatus (strain Norway 4)), this protein is Ferredoxin-2.